A 520-amino-acid chain; its full sequence is Ribonuclease Y (520 aa).

Residues Thr-4–Val-24 form a helical membrane-spanning segment. Residues Lys-86–Glu-116 form a disordered region. The KH domain occupies Thr-210–Leu-273. Residues Val-336–Ala-429 form the HD domain.

It belongs to the RNase Y family.

The protein localises to the cell membrane. Functionally, endoribonuclease that initiates mRNA decay. The chain is Ribonuclease Y from Bacillus cereus (strain ATCC 10987 / NRS 248).